The primary structure comprises 240 residues: Glutathione S-transferase theta-1 (240 aa).

The 81-residue stretch at 2–82 (VLELYLDLLS…YLAHKYKVPD (81 aa)) folds into the GST N-terminal domain. Residues histidine 40, 53–54 (KV), and 66–67 (ES) each bind glutathione. The region spanning 88–223 (DLQARARVDE…ILKVRDCPPA (136 aa)) is the GST C-terminal domain.

This sequence belongs to the GST superfamily. Theta family. In terms of assembly, homodimer. In liver, highest expression found in central vein limiting plate hepatocytes. In lung, expressed mainly in club cells of the bronchiolar epithelium and, at low levels, in type II alveolar cells.

It localises to the cytoplasm. The catalysed reaction is RX + glutathione = an S-substituted glutathione + a halide anion + H(+). In terms of biological role, conjugation of reduced glutathione to a wide number of exogenous and endogenous hydrophobic electrophiles. Also binds steroids, bilirubin, carcinogens and numerous organic anions. Has dichloromethane dehalogenase activity. The sequence is that of Glutathione S-transferase theta-1 (Gstt1) from Rattus norvegicus (Rat).